The following is a 122-amino-acid chain: Large ribosomal subunit protein uL14 (122 aa).

This sequence belongs to the universal ribosomal protein uL14 family. In terms of assembly, part of the 50S ribosomal subunit. Forms a cluster with proteins L3 and L19. In the 70S ribosome, L14 and L19 interact and together make contacts with the 16S rRNA in bridges B5 and B8.

Functionally, binds to 23S rRNA. Forms part of two intersubunit bridges in the 70S ribosome. In Alteromonas mediterranea (strain DSM 17117 / CIP 110805 / LMG 28347 / Deep ecotype), this protein is Large ribosomal subunit protein uL14.